The following is a 346-amino-acid chain: Protein RecA (346 aa).

67-74 provides a ligand contact to ATP; that stretch reads GPESSGKT.

Belongs to the RecA family.

It localises to the cytoplasm. Its function is as follows. Can catalyze the hydrolysis of ATP in the presence of single-stranded DNA, the ATP-dependent uptake of single-stranded DNA by duplex DNA, and the ATP-dependent hybridization of homologous single-stranded DNAs. It interacts with LexA causing its activation and leading to its autocatalytic cleavage. This chain is Protein RecA, found in Frankia alni (strain DSM 45986 / CECT 9034 / ACN14a).